A 591-amino-acid chain; its full sequence is L-fucose isomerase (591 aa).

Active-site proton acceptor residues include glutamate 337 and aspartate 361. Residues glutamate 337, aspartate 361, and histidine 528 each coordinate Mn(2+).

It belongs to the L-fucose isomerase family. Homohexamer. Mn(2+) is required as a cofactor.

It is found in the cytoplasm. It catalyses the reaction L-fucose = L-fuculose. Its pathway is carbohydrate degradation; L-fucose degradation; L-lactaldehyde and glycerone phosphate from L-fucose: step 1/3. Converts the aldose L-fucose into the corresponding ketose L-fuculose. This Salmonella paratyphi A (strain ATCC 9150 / SARB42) protein is L-fucose isomerase.